Consider the following 500-residue polypeptide: Glycerol-3-phosphate acyltransferase 7 (500 aa).

Helical transmembrane passes span 38–58 and 235–255; these read GLIRFATLLFLWPIIALLDVL and ALIILLWIPFGIILAMIRIFV. An HXXXXD motif motif is present at residues 298–303; sequence HRTLMD.

The protein belongs to the GPAT/DAPAT family. Weakly or not expressed in roots, leaves, seedlings, developing siliques and flower buds.

The protein localises to the membrane. It carries out the reaction sn-glycerol 3-phosphate + an acyl-CoA = a 1-acyl-sn-glycero-3-phosphate + CoA. It functions in the pathway phospholipid metabolism; CDP-diacylglycerol biosynthesis; CDP-diacylglycerol from sn-glycerol 3-phosphate: step 1/3. In terms of biological role, esterifies acyl-group from acyl-ACP to the sn-1 position of glycerol-3-phosphate, an essential step in glycerolipid biosynthesis. The chain is Glycerol-3-phosphate acyltransferase 7 (GPAT7) from Arabidopsis thaliana (Mouse-ear cress).